A 247-amino-acid polypeptide reads, in one-letter code: MAGHSKWANTKHRKAAQDSKRGKIFTKIIRELVTAAKLGGGDPGANPRLRAAIDKALSNNMTRDTLNRAIARGVGGDDDSNMETIIYEGYGPGGTAVMIECLSDNRNRTVAEVRHAFTKCGGNLGTDGSVAYLFTKKGVITYAPGLDEDVVMEAALEAGAEDIVSYDDGVIDVFTAWENLGEVKDALTAAGFTADSAEVSMIPSTKADMDEETAPKLLRLIDMLEDCDDVQEVYHNGEISDEVAATL.

It belongs to the TACO1 family.

The protein resides in the cytoplasm. In Serratia proteamaculans (strain 568), this protein is Probable transcriptional regulatory protein Spro_2779.